A 176-amino-acid chain; its full sequence is Tubulin polymerization-promoting protein family member 3 (176 aa).

The disordered stretch occupies residues 132-151 (TGSHKERFDQTGKGKGKSGR). Residues 134 to 151 (SHKERFDQTGKGKGKSGR) are compositionally biased toward basic and acidic residues.

The protein belongs to the TPPP family.

The protein localises to the cytoplasm. It is found in the cytoskeleton. In terms of biological role, regulator of microtubule dynamic that has microtubule bundling activity. In Xenopus laevis (African clawed frog), this protein is Tubulin polymerization-promoting protein family member 3 (tppp3).